Reading from the N-terminus, the 159-residue chain is Putative ribosomal RNA large subunit methyltransferase H (159 aa).

S-adenosyl-L-methionine-binding positions include L76, G108, and 127–132 (FSKMTF).

Belongs to the RNA methyltransferase RlmH family.

The protein localises to the cytoplasm. The enzyme catalyses pseudouridine(1915) in 23S rRNA + S-adenosyl-L-methionine = N(3)-methylpseudouridine(1915) in 23S rRNA + S-adenosyl-L-homocysteine + H(+). Its function is as follows. Specifically methylates the pseudouridine at position 1915 (m3Psi1915) in 23S rRNA. This Methanococcus maripaludis (strain C6 / ATCC BAA-1332) protein is Putative ribosomal RNA large subunit methyltransferase H.